A 231-amino-acid polypeptide reads, in one-letter code: Membrane protein YknW (231 aa).

5 helical membrane-spanning segments follow: residues 38–58 (VWGP…LQSL), 93–113 (GAII…WLCV), 128–148 (LSLF…IVAF), 171–191 (LASV…LLAI), and 205–225 (WISA…SGLI).

As to quaternary structure, interacts with a complex composed of YknX, YknY and YknZ.

The protein localises to the cell membrane. Part of an unusual four-component transporter, which is required for protection against the killing factor SdpC (sporulation-delaying protein). Has a role in the assembly of the YknXYZ complex. This is Membrane protein YknW (yknW) from Bacillus subtilis (strain 168).